Consider the following 289-residue polypeptide: 1D-myo-inositol 2-acetamido-2-deoxy-alpha-D-glucopyranoside deacetylase 1 (289 aa).

Residues His4, Asp7, and His140 each coordinate Zn(2+).

The protein belongs to the MshB deacetylase family. The cofactor is Zn(2+).

The catalysed reaction is 1D-myo-inositol 2-acetamido-2-deoxy-alpha-D-glucopyranoside + H2O = 1D-myo-inositol 2-amino-2-deoxy-alpha-D-glucopyranoside + acetate. In terms of biological role, catalyzes the deacetylation of 1D-myo-inositol 2-acetamido-2-deoxy-alpha-D-glucopyranoside (GlcNAc-Ins) in the mycothiol biosynthesis pathway. The protein is 1D-myo-inositol 2-acetamido-2-deoxy-alpha-D-glucopyranoside deacetylase 1 of Frankia alni (strain DSM 45986 / CECT 9034 / ACN14a).